The following is a 170-amino-acid chain: Inosine/xanthosine triphosphatase (170 aa).

The protein belongs to the YjjX NTPase family. In terms of assembly, homodimer. Mg(2+) is required as a cofactor. The cofactor is Mn(2+).

The enzyme catalyses XTP + H2O = XDP + phosphate + H(+). The catalysed reaction is ITP + H2O = IDP + phosphate + H(+). In terms of biological role, phosphatase that hydrolyzes non-canonical purine nucleotides such as XTP and ITP to their respective diphosphate derivatives. Probably excludes non-canonical purines from DNA/RNA precursor pool, thus preventing their incorporation into DNA/RNA and avoiding chromosomal lesions. This is Inosine/xanthosine triphosphatase from Aliivibrio fischeri (strain ATCC 700601 / ES114) (Vibrio fischeri).